The chain runs to 185 residues: Ethylene-responsive transcription factor ERF017 (185 aa).

Positions 11 to 68 (KYKGVRKRKWGKWVSEIRLPNSRERIWLGSYDTPEKAARAFDAALYCLRGNNAKFNFP) form a DNA-binding region, AP2/ERF.

It belongs to the AP2/ERF transcription factor family. ERF subfamily.

It is found in the nucleus. Functionally, probably acts as a transcriptional activator. Binds to the GCC-box pathogenesis-related promoter element. May be involved in the regulation of gene expression by stress factors and by components of stress signal transduction pathways. In Arabidopsis thaliana (Mouse-ear cress), this protein is Ethylene-responsive transcription factor ERF017 (ERF017).